Consider the following 100-residue polypeptide: MAKVNIKPLEDKILVQANEAETTTASGLVIPDTAKEKPQEGTVVAVGPGRWDEDGEKRIPLDVAEGDTVIYSKYGGTEIKYGGEEYLILSARDVLAVVSK.

The protein belongs to the GroES chaperonin family. As to quaternary structure, heptamer of 7 subunits arranged in a ring. Interacts with the chaperonin GroEL.

It is found in the cytoplasm. Together with the chaperonin GroEL, plays an essential role in assisting protein folding. The GroEL-GroES system forms a nano-cage that allows encapsulation of the non-native substrate proteins and provides a physical environment optimized to promote and accelerate protein folding. GroES binds to the apical surface of the GroEL ring, thereby capping the opening of the GroEL channel. In Mycobacterium marinum (strain ATCC BAA-535 / M), this protein is Co-chaperonin GroES.